A 55-amino-acid polypeptide reads, in one-letter code: Ribulose bisphosphate carboxylase large chain (55 aa).

Catalysis depends on histidine 18, which acts as the Proton acceptor. Substrate contacts are provided by arginine 19 and histidine 27.

Belongs to the RuBisCO large chain family. Type I subfamily. In terms of assembly, heterohexadecamer of 8 large chains and 8 small chains; disulfide-linked. The disulfide link is formed within the large subunit homodimers. The cofactor is Mg(2+). In terms of processing, the disulfide bond which can form in the large chain dimeric partners within the hexadecamer appears to be associated with oxidative stress and protein turnover.

The protein localises to the plastid. It localises to the chloroplast. The enzyme catalyses 2 (2R)-3-phosphoglycerate + 2 H(+) = D-ribulose 1,5-bisphosphate + CO2 + H2O. It carries out the reaction D-ribulose 1,5-bisphosphate + O2 = 2-phosphoglycolate + (2R)-3-phosphoglycerate + 2 H(+). RuBisCO catalyzes two reactions: the carboxylation of D-ribulose 1,5-bisphosphate, the primary event in carbon dioxide fixation, as well as the oxidative fragmentation of the pentose substrate in the photorespiration process. Both reactions occur simultaneously and in competition at the same active site. The protein is Ribulose bisphosphate carboxylase large chain of Vitis sp. (Grape).